The chain runs to 79 residues: Dolichyl-diphosphooligosaccharide--protein glycosyltransferase subunit TMEM258 (79 aa).

Helical transmembrane passes span leucine 18 to methionine 38 and phenylalanine 55 to valine 75.

Belongs to the OST5 family. In terms of assembly, component of the oligosaccharyltransferase (OST) complex.

It is found in the membrane. It participates in protein modification; protein glycosylation. Subunit of the oligosaccharyl transferase (OST) complex that catalyzes the initial transfer of a defined glycan (Glc(3)Man(9)GlcNAc(2) in eukaryotes) from the lipid carrier dolichol-pyrophosphate to an asparagine residue within an Asn-X-Ser/Thr consensus motif in nascent polypeptide chains, the first step in protein N-glycosylation. N-glycosylation occurs cotranslationally and the complex associates with the Sec61 complex at the channel-forming translocon complex that mediates protein translocation across the endoplasmic reticulum (ER). All subunits are required for a maximal enzyme activity. The sequence is that of Dolichyl-diphosphooligosaccharide--protein glycosyltransferase subunit TMEM258 from Caenorhabditis briggsae.